The primary structure comprises 139 residues: Gonadotropin subunit beta-2 (139 aa).

Residues 1–24 (MFPLVLSLFLGATSDIWPLAPAEA) form the signal peptide. 6 disulfides stabilise this stretch: C30–C78, C44–C93, C47–C131, C55–C109, C59–C111, and C114–C121. A glycan (N-linked (GlcNAc...) asparagine) is linked at N34.

This sequence belongs to the glycoprotein hormones subunit beta family. Heterodimer of an alpha and a beta chain.

The protein localises to the secreted. Its function is as follows. Involved in gametogenesis and steroidogenesis. In Morone saxatilis (Striped bass), this protein is Gonadotropin subunit beta-2 (cgbb).